Here is a 498-residue protein sequence, read N- to C-terminus: MPQRPEAARAGPVAGPDAASKPAPGPALTLRGAGRAYGPVRALRPLTLEIRRGERVALLGPSGAGKSTLLRLLDTSLAPSEGTVEVLGQPVADTDARRLRALRARIGTVHQQLLLVPQATAMQNVVAGRLGRTSLARTLAALVSRREAARVRAVLDEVGIGDKIFERVDRLSGGEQQRVAIARTLYQDPELILADEPLASVDPARAADIAALLARAFAGRTLVVSTHRIEPLLAHVDRVVALREGALAFDKPAAALTLRDLGELYEARRGAADPARAPAARPPSDPVVAPGGTLRIGASSTPGEHLLPSIVRAFARAYPGTRVSLSLSDSAAVTAAVRDGALDLGFVGARDDDPALAYEDVARDEIVLVAAPVLELPPEPITLEVAARLPRVDREPGSGTRAVVEQHLANMGAALDPAAVVLEAGALVALKAAVVSGMGVAFVSRRAVEDDLRGGHVRTVRVEGLSIPRHVFAVLRRSPVPSAAARAFLEVARAEVPP.

Residues 1-27 (MPQRPEAARAGPVAGPDAASKPAPGPA) are disordered. The ABC transporter domain occupies 28 to 269 (LTLRGAGRAY…DLGELYEARR (242 aa)). An ATP-binding site is contributed by 60 to 67 (GPSGAGKS). Residues 270-498 (GAADPARAPA…LEVARAEVPP (229 aa)) form a lysR substrate binding domain region.

The protein belongs to the ABC transporter superfamily. Phosphonates importer (TC 3.A.1.9.1) family. In terms of assembly, the complex is composed of two ATP-binding proteins (PhnC), two transmembrane proteins (PhnE) and a solute-binding protein (PhnD).

The protein resides in the cell inner membrane. The catalysed reaction is phosphonate(out) + ATP + H2O = phosphonate(in) + ADP + phosphate + H(+). In terms of biological role, part of the ABC transporter complex PhnCDE involved in phosphonates import. Responsible for energy coupling to the transport system. The protein is Phosphonates import ATP-binding protein PhnC of Anaeromyxobacter dehalogenans (strain 2CP-C).